Reading from the N-terminus, the 348-residue chain is Protein RecA (348 aa).

65-72 (GPESSGKT) is a binding site for ATP.

This sequence belongs to the RecA family.

The protein localises to the cytoplasm. Its function is as follows. Can catalyze the hydrolysis of ATP in the presence of single-stranded DNA, the ATP-dependent uptake of single-stranded DNA by duplex DNA, and the ATP-dependent hybridization of homologous single-stranded DNAs. It interacts with LexA causing its activation and leading to its autocatalytic cleavage. This Vibrio anguillarum (strain ATCC 68554 / 775) (Listonella anguillarum) protein is Protein RecA.